A 432-amino-acid polypeptide reads, in one-letter code: C-type cytochrome OmcS (432 aa).

The first 25 residues, 1 to 25, serve as a signal peptide directing secretion; the sequence is MKKGMKVSLSVAAAALLMSAPAAFA.

Requires heme as cofactor.

The protein localises to the cell outer membrane. Its subcellular location is the cell surface. Its function is as follows. Plays an important role in extracellular electron transfer. Can transfer electrons to insoluble Fe(3+) oxides as well as other extracellular electron acceptors, including Mn(4+) oxide and humic substances. Essential for direct interspecies electron transfer (DIET) in cocultures with G.metallireducens. This is C-type cytochrome OmcS from Geobacter sulfurreducens (strain ATCC 51573 / DSM 12127 / PCA).